Reading from the N-terminus, the 242-residue chain is Phosphatidylcholine synthase (242 aa).

At 1 to 15 the chain is on the cytoplasmic side; sequence MKIFNYKRVPYAEMR. Residues 16 to 36 traverse the membrane as a helical segment; sequence AFSVHILTASGSFLAFLGVVA. Over 37-41 the chain is Periplasmic; sequence AAEHR. A helical transmembrane segment spans residues 42–62; the sequence is FIDMFWWLGLALLVDGIDGPI. Topologically, residues 63–76 are cytoplasmic; sequence ARKVRVKEVLPNWS. The helical transmembrane segment at 77-97 threads the bilayer; sequence GDTLDNIIDYVTYVLLPAFAL. Over 98–100 the chain is Periplasmic; the sequence is YQS. The chain crosses the membrane as a helical span at residues 101–121; that stretch reads GMIGEPWSFVAAGMIVVSSAI. Over 122–133 the chain is Cytoplasmic; the sequence is YYADMGMKTDEY. Residues 134-154 form a helical membrane-spanning segment; it reads FFSGFPVVWNMIVFTLFVIDA. At 155–159 the chain is on the periplasmic side; sequence SATTA. The chain crosses the membrane as a helical span at residues 160–180; sequence LTVVIVSVVLTFLPINFLHPV. Topologically, residues 181-187 are cytoplasmic; it reads RVKRLRP. A helical transmembrane segment spans residues 188–208; that stretch reads LNLGVFFLWSALGIFSLLMHF. Over 209 to 214 the chain is Periplasmic; that stretch reads DTPEWA. A helical membrane pass occupies residues 215–235; that stretch reads LILFIVTGAYLYVIGAVLQFF. At 236–242 the chain is on the cytoplasmic side; the sequence is PALGRET.

Belongs to the CDP-alcohol phosphatidyltransferase class-I family. It depends on Mn(2+) as a cofactor.

The protein resides in the cell inner membrane. The enzyme catalyses a CDP-1,2-diacyl-sn-glycerol + choline = a 1,2-diacyl-sn-glycero-3-phosphocholine + CMP + H(+). Functionally, condenses choline with CDP-diglyceride to produce phosphatidylcholine and CMP. This is Phosphatidylcholine synthase from Rhizobium johnstonii (strain DSM 114642 / LMG 32736 / 3841) (Rhizobium leguminosarum bv. viciae).